The chain runs to 133 residues: CDGSH iron-sulfur domain protein (133 aa).

Over Met-1 to Asp-35 the chain is Lumenal. Residues Trp-36–Cys-58 form a helical membrane-spanning segment. Topologically, residues Pro-59–Lys-133 are cytoplasmic. 4 residues coordinate [2Fe-2S] cluster: Cys-100, Cys-102, Cys-111, and His-115.

The protein belongs to the CISD protein family. CISD2 subfamily. The cofactor is [2Fe-2S] cluster.

It is found in the endoplasmic reticulum membrane. This chain is CDGSH iron-sulfur domain protein, found in Drosophila melanogaster (Fruit fly).